The chain runs to 398 residues: Arylacetamide deacetylase (398 aa).

At 1–5 (MGRTI) the chain is on the cytoplasmic side. A helical; Signal-anchor for type II membrane protein transmembrane segment spans residues 6-26 (FLLISVVLVAYYIYIPLPDDI). At 27–398 (EEPWKIILGN…QYLNWLHKNL (372 aa)) the chain is on the lumenal side. N-linked (GlcNAc...) asparagine glycosylation is present at Asn77. An Involved in the stabilization of the negatively charged intermediate by the formation of the oxyanion hole motif is present at residues 110 to 112 (HGG). A disulfide bridge connects residues Cys115 and Cys339. The active site involves Ser188. N-linked (GlcNAc...) asparagine glycosylation is found at Asn192, Asn281, and Asn324. Residues Asp342 and His372 contribute to the active site.

This sequence belongs to the 'GDXG' lipolytic enzyme family. As to expression, highest levels in liver with lower levels in jejunum, kidney and testis.

It localises to the endoplasmic reticulum membrane. The protein resides in the microsome membrane. It catalyses the reaction a triacylglycerol + H2O = a diacylglycerol + a fatty acid + H(+). Displays cellular triglyceride lipase activity in liver, increases the levels of intracellular fatty acids derived from the hydrolysis of newly formed triglyceride stores and plays a role in very low-density lipoprotein assembly. Displays serine esterase activity in liver. Deacetylates a variety of arylacetamide substrates, including xenobiotic compounds and procarcinogens, converting them to the primary arylamide compounds and increasing their toxicity. This chain is Arylacetamide deacetylase (Aadac), found in Rattus norvegicus (Rat).